We begin with the raw amino-acid sequence, 458 residues long: Inner kinetochore subunit CHL4 (458 aa).

It belongs to the CENP-N/CHL4 family. As to quaternary structure, forms a heterodimer with IML3. CHL4-IML3 is part of a larger constitutive centromere-associated network (CCAN) (also known as central kinetochore CTF19 complex in yeast), which is composed of at least AME1, CHL4, CNN1, CTF3, CTF19, IML3, MCM16, MCM21, MCM22, MHF1, MHF2, MIF2, NKP1, NKP2, OKP1 and WIP1. Interacts with CTF3 and CTF19.

It localises to the nucleus. The protein resides in the chromosome. The protein localises to the centromere. Its subcellular location is the kinetochore. In terms of biological role, component of the kinetochore, a multiprotein complex that assembles on centromeric DNA and attaches chromosomes to spindle microtubules, mediating chromosome segregation and sister chromatid segregation during meiosis and mitosis. Component of the inner kinetochore constitutive centromere-associated network (CCAN), which serves as a structural platform for outer kinetochore assembly. The sequence is that of Inner kinetochore subunit CHL4 (CHL4) from Saccharomyces cerevisiae (strain ATCC 204508 / S288c) (Baker's yeast).